The following is a 74-amino-acid chain: NAD(P)H-quinone oxidoreductase subunit O (74 aa).

The protein belongs to the complex I NdhO subunit family. In terms of assembly, NDH-1 can be composed of about 15 different subunits; different subcomplexes with different compositions have been identified which probably have different functions.

The protein resides in the cellular thylakoid membrane. It catalyses the reaction a plastoquinone + NADH + (n+1) H(+)(in) = a plastoquinol + NAD(+) + n H(+)(out). It carries out the reaction a plastoquinone + NADPH + (n+1) H(+)(in) = a plastoquinol + NADP(+) + n H(+)(out). In terms of biological role, NDH-1 shuttles electrons from an unknown electron donor, via FMN and iron-sulfur (Fe-S) centers, to quinones in the respiratory and/or the photosynthetic chain. The immediate electron acceptor for the enzyme in this species is believed to be plastoquinone. Couples the redox reaction to proton translocation, and thus conserves the redox energy in a proton gradient. Cyanobacterial NDH-1 also plays a role in inorganic carbon-concentration. This chain is NAD(P)H-quinone oxidoreductase subunit O, found in Synechococcus sp. (strain RCC307).